We begin with the raw amino-acid sequence, 151 residues long: UPF0178 protein ESA_02916 (151 aa).

The protein belongs to the UPF0178 family.

The chain is UPF0178 protein ESA_02916 from Cronobacter sakazakii (strain ATCC BAA-894) (Enterobacter sakazakii).